We begin with the raw amino-acid sequence, 535 residues long: Sodium/hydrogen exchanger 9B2 (535 aa).

Residues 1–14 (MRNQDKRAAHKDSE) are compositionally biased toward basic and acidic residues. Positions 1–70 (MRNQDKRAAH…TPAEPNHLQR (70 aa)) are disordered. Over 1 to 85 (MRNQDKRAAH…ACPPRGLLAR (85 aa)) the chain is Cytoplasmic. Composition is skewed to polar residues over residues 16–34 (STEV…QETG) and 46–58 (TEGS…NEKM). Residues 86–103 (VITNVTMVILLWAVVWSV) form a helical membrane-spanning segment. At 104–112 (TGSECLPGG) the chain is on the extracellular side. A helical membrane pass occupies residues 113–132 (NLFGIIMLFYCAIIGGKLFG). The Cytoplasmic portion of the chain corresponds to 133–143 (LIKLPTLPPLP). Residues 144-160 (PLLGMLLAGFLIRNVPV) traverse the membrane as a helical segment. The Extracellular segment spans residues 161-170 (ISDNIQIKHK). Residues 171 to 188 (WSSALRSIALSVILVRAG) form a helical membrane-spanning segment. Residues 189 to 199 (LGLDSNALKKL) are Cytoplasmic-facing. Residues 200–226 (KGVCVRLSLGPCLIEACTSAVLAYFLM) traverse the membrane as a helical segment. The Extracellular segment spans residues 227 to 232 (GLPWQW). A helical membrane pass occupies residues 233–241 (GFMLGFVLG). Over 242 to 269 (AVSPAVVVPSMLLLQEGGYGVEKGIPTL) the chain is Cytoplasmic. Val-243, Gly-274, Asp-277, and Asp-278 together coordinate Na(+). Residues 270–289 (LMAAGSFDDILAITGFNTCL) form a helical membrane-spanning segment. The Extracellular segment spans residues 290-299 (GMAFSTGSTV). Residues 300 to 323 (FNVLKGVLEVIIGVVTGLVLGFFI) form a helical membrane-spanning segment. Residues 324-338 (QYFPSSDQDNLVWKR) are Cytoplasmic-facing. Residues 339–356 (AFLVLGLSVLAVFSSTYF) form a helical membrane-spanning segment. Over 357 to 360 (GFPG) the chain is Extracellular. Residues 361 to 372 (SGGLCTLVTAFL) form a helical membrane-spanning segment. The Cytoplasmic portion of the chain corresponds to 373 to 389 (AGRGWASTKTDVEKVIA). Residues 390–410 (VAWDIFQPLLFGLIGAEVLIT) form a helical membrane-spanning segment. Topologically, residues 411–416 (ALRPET) are extracellular. A helical membrane pass occupies residues 417-439 (IGLCVATLGIAVLIRILVTYLMV). At 440 to 460 (CFAGFNIKEKIFISFAWLPKA) the chain is on the cytoplasmic side. Residues 461 to 472 (TVQAAIGSVALD) traverse the membrane as a helical segment. The Extracellular portion of the chain corresponds to 473 to 485 (TARSHGEKQLEGY). The helical transmembrane segment at 486–508 (GMDVLTVAFLSIIITAPVGSLLI) threads the bilayer. Residues 509-535 (GLLGPRLLQKAEQNKDEEDQGETSIQV) lie on the Cytoplasmic side of the membrane.

It belongs to the monovalent cation:proton antiporter 1 (CPA1) transporter (TC 2.A.36) family. Homodimer; dimerization is essential for SLC9B2 activity. Lipids seem to play a role in the stabilization of the dimerization subdomain.

The protein localises to the cell membrane. The protein resides in the mitochondrion membrane. It is found in the endosome membrane. Its subcellular location is the recycling endosome membrane. It localises to the lysosome membrane. The protein localises to the cytoplasmic vesicle. The protein resides in the secretory vesicle. It is found in the synaptic vesicle membrane. Its subcellular location is the cell projection. It localises to the cilium. The protein localises to the flagellum membrane. The protein resides in the basolateral cell membrane. It is found in the apical cell membrane. It catalyses the reaction Li(+)(out) + H(+)(in) = Li(+)(in) + H(+)(out). The catalysed reaction is Li(+)(in) + Na(+)(out) = Li(+)(out) + Na(+)(in). The enzyme catalyses Na(+)(in) + H(+)(out) = Na(+)(out) + H(+)(in). Allosterically inhibited by the N-terminal domain. Inhibited by phloretin. In terms of biological role, electroneutral Na(+) Li(+)/H(+) antiporter that extrudes Na(+) or Li(+) in exchange for external protons across the membrane. Uses the proton gradient/membrane potential to extrude sodium. Contributes to the regulation of intracellular pH and sodium homeostasis. Also able to mediate Na(+)/Li(+) antiporter activity in kidney. May play a physiological role in renal tubular function and blood pressure homeostasis. Plays an important role for insulin secretion and clathrin-mediated endocytosis in beta-cells. Involved in sperm motility and fertility. It is controversial whether SLC9B2 plays a role in osteoclast differentiation or not. The sequence is that of Sodium/hydrogen exchanger 9B2 (SLC9B2) from Bison bison bison (North American plains bison).